The sequence spans 408 residues: Mitochondrial outer membrane protein SLC25A46 (408 aa).

2 disordered regions span residues 1–23 (MHPR…EEPC) and 52–80 (HWGE…LGAG). Over residues 66–76 (LGAAGLNEEPG) the composition is skewed to low complexity. Residues 86–177 (QLNRFAGFGI…GIISEFTPLP (92 aa)) form a Solcar 1 repeat. The next 6 helical transmembrane spans lie at 93-113 (FGIG…CIVL), 157-177 (FIVQ…TPLP), 189-209 (IGGH…FYSA), 248-268 (LLPL…HYVI), 304-324 (FPEL…LYPL), and 373-393 (LGFY…VAVL). Residues 301 to 403 (DAYFPELIAS…QLTKIIYSTL (103 aa)) form a Solcar 2 repeat.

It belongs to the mitochondrial carrier (TC 2.A.29) family.

The protein localises to the mitochondrion outer membrane. Functionally, transmembrane protein of the mitochondrial outer membrane that controls mitochondrial organization. May regulate the assembly of the MICOS (mitochondrial contact site and cristae organizing system) complex which is essential to the biogenesis and dynamics of mitochondrial cristae, the inwards folds of the inner mitochondrial membrane. Through its interaction with the EMC (endoplasmic reticulum membrane protein complex), could regulate mitochondrial lipid homeostasis and thereby mitochondrial fission. The chain is Mitochondrial outer membrane protein SLC25A46 from Gallus gallus (Chicken).